Consider the following 415-residue polypeptide: Thyroxine-binding globulin (415 aa).

A signal peptide spans 1-20; it reads MSPFLYLVLLVLGLHATIHC. Asn36 carries N-linked (GlcNAc...) (complex) asparagine glycosylation. Asn99 carries an N-linked (GlcNAc...) asparagine glycan. N-linked (GlcNAc...) asparagine; in variant Gary glycosylation occurs at Ile116. Residues Asn165 and Asn253 are each glycosylated (N-linked (GlcNAc...) asparagine). Positions 293 and 398 each coordinate thyroxine.

Belongs to the serpin family. As to expression, expressed by the liver and secreted in plasma.

It localises to the secreted. In terms of biological role, major thyroid hormone transport protein in serum. The chain is Thyroxine-binding globulin (SERPINA7) from Homo sapiens (Human).